A 234-amino-acid chain; its full sequence is Ribosomal RNA small subunit methyltransferase G (234 aa).

Residues glycine 74, phenylalanine 79, 125-126 (AE), and arginine 144 contribute to the S-adenosyl-L-methionine site.

The protein belongs to the methyltransferase superfamily. RNA methyltransferase RsmG family.

The protein localises to the cytoplasm. In terms of biological role, specifically methylates the N7 position of a guanine in 16S rRNA. This chain is Ribosomal RNA small subunit methyltransferase G, found in Roseiflexus castenholzii (strain DSM 13941 / HLO8).